A 727-amino-acid chain; its full sequence is Adhesion G protein-coupled receptor L4 (727 aa).

The N-terminal stretch at 1–19 (MKLLLFAAWFSSLLDPCRF) is a signal peptide. Residues 20–467 (LDICQSCHPN…LAHYNVLTRI (448 aa)) lie on the Extracellular side of the membrane. Positions 52 to 90 (DDNECETVPEICGLHANCTNYVGGYYCNCLSGFISNGTE) constitute an EGF-like 1; calcium-binding domain. Disulfide bonds link C56-C69, C63-C78, C106-C118, C112-C127, C408-C438, and C426-C440. One can recognise an EGF-like 2; calcium-binding domain in the interval 102-139 (DINECEEDRKCGPNSKCHNNIGSFICSCLRGYTSPAGP). Residues 282-456 (TQMQVHAGDV…AILMSSARAN (175 aa)) form the GAIN-B domain. The interval 408–456 (CAFWEYSPSMMGHWSLDGCIRTRVNTTHTSCSCNHLTHFAILMSSARAN) is GPS. Residues 468 to 488 (TQLGMVISLICLSMCIFTFWF) form a helical membrane-spanning segment. At 489–496 (FRDIQNTR) the chain is on the cytoplasmic side. The helical transmembrane segment at 497 to 517 (TTIHKNLCCSLFMAQFIFLIG) threads the bilayer. Topologically, residues 518–535 (INKSAHKWFCSLIAGLLH) are extracellular. A helical membrane pass occupies residues 536 to 556 (YFFLAAFAWMCIEGIHLYLIV). Topologically, residues 557–568 (VGVIYNKGFLHR) are cytoplasmic. Residues 569-589 (NFYAFGYGSPAVVVAISATLG) form a helical membrane-spanning segment. Over 590–609 (YKYYGTSSVCWLSTENNFIW) the chain is Extracellular. Residues 610–630 (SFIGPAILIILVNLLAFAVII) form a helical membrane-spanning segment. The Cytoplasmic segment spans residues 631–654 (YKVYRHTAVKKPEISHYENIRSCA). The helical transmembrane segment at 655–675 (RGAIALLFVLGVTWAFGVMYI) threads the bilayer. Over 676-682 (LYETTLT) the chain is Extracellular. The helical transmembrane segment at 683–703 (AYLFTFANVFQGMFIFIFLCV) threads the bilayer.

Belongs to the G-protein coupled receptor 2 family. Adhesion G-protein coupled receptor (ADGR) subfamily. Heterodimer of 2 chains generated by proteolytic processing; the large extracellular N-terminal fragment and the membrane-bound C-terminal fragment predominantly remain associated and non-covalently linked. Autoproteolytically processed at the GPS region of the GAIN-B domain; this cleavage modulates receptor activity.

It localises to the cell membrane. In terms of biological role, orphan receptor that plays a role in vessel formation. In Danio rerio (Zebrafish), this protein is Adhesion G protein-coupled receptor L4.